A 223-amino-acid polypeptide reads, in one-letter code: MPGDFSVCVCISPPPQPQFHCSPADSLRPCLVPTRRPPDPRKKNVVFADALGLALTSVRHFTRAFFDEEPLVLALASLRALRPLSSPTYTLDFSPPTQDYGRYREQLTRKLVCLEQCAVQGAAVAGTVRVRNVGYEKRVTLRVSYDGWCNHYDLPCTYLFDTRRGGDTDSFSFRMPLPVGTERAEFCICYWCAGEEYWDNNDGKNYSLHKEGKGKGYLQGPYW.

In terms of domain architecture, CBM21 spans 104–209; the sequence is REQLTRKLVC…NNDGKNYSLH (106 aa).

Interacts with PPP1CC catalytic subunit of PP1 and associates with glycogen. Forms complexes with glycogen phosphorylase, glycogen synthase and phosphorylase kinase which is necessary for its regulation of PP1 activity.

Acts as a glycogen-targeting subunit for PP1 and regulates its activity. Activates glycogen synthase, reduces glycogen phosphorylase activity and limits glycogen breakdown. This is Protein phosphatase 1 regulatory subunit 3C from Xenopus tropicalis (Western clawed frog).